A 707-amino-acid polypeptide reads, in one-letter code: Choline transporter-like protein 4 (707 aa).

The Cytoplasmic portion of the chain corresponds to 1–27; that stretch reads MASEEYGEPAKHDPSFKGPIKKRGCTD. A helical membrane pass occupies residues 28–48; that stretch reads IICCVLFMVFLLGYMVVGILA. The Extracellular portion of the chain corresponds to 49–225; that stretch reads WLYGDPRQVI…KIFEDFAKSW (177 aa). N-linked (GlcNAc...) asparagine glycosylation is found at N62, N140, N176, N191, and N196. Residues 226 to 246 traverse the membrane as a helical segment; sequence PWIITALVIAMVVSLLFLILL. At 247-249 the chain is on the cytoplasmic side; the sequence is RFT. The chain crosses the membrane as a helical span at residues 250 to 270; sequence AGILVWVLIVGVIGVIGYGIY. Topologically, residues 271–305 are extracellular; sequence HCYMEYDTLNKQGVSVSDVGFTFNLGVYFRVKETW. The chain crosses the membrane as a helical span at residues 306 to 326; sequence LAILIVLAVVEAILLLVLLFL. Over 327–354 the chain is Cytoplasmic; it reads RKRILIAIALIKEASKAIGHIMSSLFYP. Residues 355–375 form a helical membrane-spanning segment; sequence LVTFVLLVVCVAYWGMTALYL. Residues 376–442 are Extracellular-facing; it reads ATSGAPIYRI…TNLFNLQIYN (67 aa). N-linked (GlcNAc...) asparagine glycans are attached at residues N389, N397, and N401. A helical membrane pass occupies residues 443 to 463; it reads VIGFLWCINFVIALGQCVLAG. Residues 464 to 494 lie on the Cytoplasmic side of the membrane; it reads AFASYYWAFHKPKDIPFFPVAESFMRTLRYH. A helical membrane pass occupies residues 495-515; it reads TGSLAFGSLILTIVQLIRIIL. The Extracellular portion of the chain corresponds to 516–556; that stretch reads EYVDHKLKGAQNPCTRFLLCCLKCCFWCLEKFIKFLNRNAY. Residues 557–577 traverse the membrane as a helical segment; sequence IMIAVYGKNFCVSAKNAFKLL. Residues 578-593 are Cytoplasmic-facing; that stretch reads MRNIVRVVVLDKVTDL. The chain crosses the membrane as a helical span at residues 594 to 614; the sequence is LIFFGKLIVVGGVGVLAFFFF. At 615 to 633 the chain is on the extracellular side; that stretch reads SGRIPIPNDSFKSPTLNYY. N-linked (GlcNAc...) asparagine glycosylation is present at N622. Residues 634-654 form a helical membrane-spanning segment; the sequence is WIPIITVVLGSYMIAHGFFSV. Residues 655-707 lie on the Cytoplasmic side of the membrane; the sequence is YNMCVDTLFLCFLEDLERNDGSQEKPYYMSKSLMSILNKKNRPPKSEEKKKKK.

It belongs to the CTL (choline transporter-like) family.

Its subcellular location is the membrane. It localises to the apical cell membrane. It catalyses the reaction choline(out) + n H(+)(in) = choline(in) + n H(+)(out). The enzyme catalyses thiamine diphosphate(out) = thiamine diphosphate(in). In terms of biological role, choline transporter that seems to play a role in the choline-acetylcholine system and is required to the efferent innervation of hair cells in the olivocochlear bundle for the maintenance of physiological function of outer hair cells and the protection of hair cells from acoustic injury. Also described as a thiamine pyrophosphate transporter. Functionally, also described as a thiamine pyrophosphate transporter. This is Choline transporter-like protein 4 (slc44a4) from Xenopus laevis (African clawed frog).